The sequence spans 234 residues: Uridylate kinase (234 aa).

10 to 11 (GS) lines the ATP pocket. G44 is a binding site for UMP. ATP-binding residues include G45 and R49. UMP is bound by residues D66 and 114–120 (ITPGQTT). The ATP site is built by T140, Y146, and D149.

The protein belongs to the UMP kinase family. Homohexamer.

It localises to the cytoplasm. The catalysed reaction is UMP + ATP = UDP + ADP. Its pathway is pyrimidine metabolism; CTP biosynthesis via de novo pathway; UDP from UMP (UMPK route): step 1/1. With respect to regulation, inhibited by UTP. In terms of biological role, catalyzes the reversible phosphorylation of UMP to UDP. This is Uridylate kinase from Methanoregula boonei (strain DSM 21154 / JCM 14090 / 6A8).